The following is a 789-amino-acid chain: Glycerol-3-phosphate acyltransferase (789 aa).

An HXXXXD motif motif is present at residues 275–280 (SHRSYI).

The protein belongs to the GPAT/DAPAT family.

The protein resides in the cell membrane. It carries out the reaction sn-glycerol 3-phosphate + an acyl-CoA = a 1-acyl-sn-glycero-3-phosphate + CoA. Its pathway is phospholipid metabolism; CDP-diacylglycerol biosynthesis; CDP-diacylglycerol from sn-glycerol 3-phosphate: step 1/3. The chain is Glycerol-3-phosphate acyltransferase from Mycobacterium bovis (strain BCG / Pasteur 1173P2).